The following is a 150-amino-acid chain: Spore germination protein GerT (150 aa).

The protein resides in the spore coat. Its function is as follows. Involved in spore germination. This Bacillus licheniformis (strain ATCC 14580 / DSM 13 / JCM 2505 / CCUG 7422 / NBRC 12200 / NCIMB 9375 / NCTC 10341 / NRRL NRS-1264 / Gibson 46) protein is Spore germination protein GerT (gerT).